The chain runs to 137 residues: Nucleoside diphosphate kinase (137 aa).

ATP-binding residues include K9, F57, R85, T91, R102, and N112. The active-site Pros-phosphohistidine intermediate is the H115.

This sequence belongs to the NDK family. In terms of assembly, homotetramer. It depends on Mg(2+) as a cofactor.

Its subcellular location is the cytoplasm. It carries out the reaction a 2'-deoxyribonucleoside 5'-diphosphate + ATP = a 2'-deoxyribonucleoside 5'-triphosphate + ADP. The catalysed reaction is a ribonucleoside 5'-diphosphate + ATP = a ribonucleoside 5'-triphosphate + ADP. Functionally, major role in the synthesis of nucleoside triphosphates other than ATP. The ATP gamma phosphate is transferred to the NDP beta phosphate via a ping-pong mechanism, using a phosphorylated active-site intermediate. The protein is Nucleoside diphosphate kinase of Leptospira biflexa serovar Patoc (strain Patoc 1 / ATCC 23582 / Paris).